The primary structure comprises 451 residues: Trigger factor (451 aa).

Positions 173-258 (GDRVTLDFVG…LKKIEWAHLP (86 aa)) constitute a PPIase FKBP-type domain.

It belongs to the FKBP-type PPIase family. Tig subfamily.

It is found in the cytoplasm. The enzyme catalyses [protein]-peptidylproline (omega=180) = [protein]-peptidylproline (omega=0). Its function is as follows. Involved in protein export. Acts as a chaperone by maintaining the newly synthesized protein in an open conformation. Functions as a peptidyl-prolyl cis-trans isomerase. The protein is Trigger factor of Cupriavidus necator (strain ATCC 17699 / DSM 428 / KCTC 22496 / NCIMB 10442 / H16 / Stanier 337) (Ralstonia eutropha).